We begin with the raw amino-acid sequence, 78 residues long: Small ribosomal subunit protein bS18 (78 aa).

The protein belongs to the bacterial ribosomal protein bS18 family. In terms of assembly, part of the 30S ribosomal subunit. Forms a tight heterodimer with protein bS6.

Functionally, binds as a heterodimer with protein bS6 to the central domain of the 16S rRNA, where it helps stabilize the platform of the 30S subunit. The polypeptide is Small ribosomal subunit protein bS18 (Levilactobacillus brevis (strain ATCC 367 / BCRC 12310 / CIP 105137 / JCM 1170 / LMG 11437 / NCIMB 947 / NCTC 947) (Lactobacillus brevis)).